Here is a 435-residue protein sequence, read N- to C-terminus: MTRSSDTIFALSSGRVPSGVAVVRASGPRAREAGLALAGLVPPPRVARYVALREPGTGDLLDRGLILFFPGPRSATGEDTLELHLHGGPAVVTAVLRTLVKLPGFRPAAAGEFTRRAHANGKMDLAEVEGLADLIVAESEAQRRQALAQSSGALSRAVAGWRERLIRALALVEATIDFSDEGDVPDDLTGPARAEAAALCTELTTALADADRGERVRDGFIIAIAGPPNAGKSTLLNRLAGREAAIVSPVPGTTRDVLEVHLHLAGQAVTLVDTAGLRETDDLVEAEGVRRARVRAEGSDLVLWLSDDGTAPPTDMPAPLRVRTKADVTGAEGEEDEIVISAQTGAGINTLIAEMERRLGEMGGGEPALVTRERQRHALSDALYELDAALAIQTHDEDLMAEHLRLAARALDQVVGRVDVEDVLESLFRTFCIGK.

Residues R24, E82, and K122 each coordinate (6S)-5-formyl-5,6,7,8-tetrahydrofolate. The TrmE-type G domain maps to 219-360; it reads GFIIAIAGPP…LIAEMERRLG (142 aa). Residue N229 coordinates K(+). GTP is bound by residues 229-234, 248-254, and 273-276; these read NAGKST, SPVPGTT, and DTAG. S233 is a Mg(2+) binding site. The K(+) site is built by S248, V250, and T253. T254 is a Mg(2+) binding site. K435 contributes to the (6S)-5-formyl-5,6,7,8-tetrahydrofolate binding site.

Belongs to the TRAFAC class TrmE-Era-EngA-EngB-Septin-like GTPase superfamily. TrmE GTPase family. In terms of assembly, homodimer. Heterotetramer of two MnmE and two MnmG subunits. It depends on K(+) as a cofactor.

It is found in the cytoplasm. Functionally, exhibits a very high intrinsic GTPase hydrolysis rate. Involved in the addition of a carboxymethylaminomethyl (cmnm) group at the wobble position (U34) of certain tRNAs, forming tRNA-cmnm(5)s(2)U34. This chain is tRNA modification GTPase MnmE, found in Azorhizobium caulinodans (strain ATCC 43989 / DSM 5975 / JCM 20966 / LMG 6465 / NBRC 14845 / NCIMB 13405 / ORS 571).